A 183-amino-acid polypeptide reads, in one-letter code: Oligoribonuclease (183 aa).

The region spanning 8–171 is the Exonuclease domain; the sequence is LIWLDLEMTG…QDIRDSIEEL (164 aa). The active site involves Y129.

The protein belongs to the oligoribonuclease family.

It is found in the cytoplasm. Functionally, 3'-to-5' exoribonuclease specific for small oligoribonucleotides. In Coxiella burnetii (strain RSA 493 / Nine Mile phase I), this protein is Oligoribonuclease.